Consider the following 196-residue polypeptide: MSSIKLIVGLANPGAEYAQTRHNAGAWYVDLLAERHNQSLKEESKFFGYTARLNLAGQDIRLLVPATFMNLSGKAVAAMASFYRILPEEILVAHDELDILPGMAKLKLGGGNGGHNGLKDIQNKLGNNPNFYRLRIGIGHPGDKSKVTGFVLGKPPASEQTLIDDAIDESIRCTEVLLNEGMTKAMNRLHAFKASA.

Tyr17 contributes to the tRNA binding site. His22 (proton acceptor) is an active-site residue. Phe68, Asn70, and Asn116 together coordinate tRNA.

It belongs to the PTH family. In terms of assembly, monomer.

Its subcellular location is the cytoplasm. It carries out the reaction an N-acyl-L-alpha-aminoacyl-tRNA + H2O = an N-acyl-L-amino acid + a tRNA + H(+). Functionally, hydrolyzes ribosome-free peptidyl-tRNAs (with 1 or more amino acids incorporated), which drop off the ribosome during protein synthesis, or as a result of ribosome stalling. In terms of biological role, catalyzes the release of premature peptidyl moieties from peptidyl-tRNA molecules trapped in stalled 50S ribosomal subunits, and thus maintains levels of free tRNAs and 50S ribosomes. The protein is Peptidyl-tRNA hydrolase of Yersinia pestis bv. Antiqua (strain Antiqua).